The following is a 139-amino-acid chain: MRITQGTFSFLPELTDEQITKQLEYCLNQGWAVGLEYTDDPHPRNTYWEMFGLPMFDLRDAAGILMEINNARNTFPNHYIRVTAFDSTHTVESVVMSFIVNRPADEPGFRLVRQEEPGRTLRYSIESYAVQARPEGSRY.

The protein belongs to the RuBisCO small chain family. Heterohexadecamer of 8 large and 8 small subunits.

In terms of biological role, ruBisCO catalyzes two reactions: the carboxylation of D-ribulose 1,5-bisphosphate, the primary event in carbon dioxide fixation, as well as the oxidative fragmentation of the pentose substrate. Both reactions occur simultaneously and in competition at the same active site. Although the small subunit is not catalytic it is essential for maximal activity. The polypeptide is Ribulose bisphosphate carboxylase small subunit, chromosomal (Cupriavidus necator (Alcaligenes eutrophus)).